The primary structure comprises 306 residues: Palmitoyl-protein thioesterase 1 (306 aa).

Residues 1–27 form the signal peptide; it reads MASPSCLWLLAVALLPWTCAARALHHL. 3 disulfide bridges follow: cysteine 45/cysteine 46, cysteine 96/cysteine 128, and cysteine 152/cysteine 160. The active site involves serine 115. 3 N-linked (GlcNAc...) asparagine glycosylation sites follow: asparagine 197, asparagine 212, and asparagine 232. Residues aspartate 233 and histidine 289 contribute to the active site.

This sequence belongs to the palmitoyl-protein thioesterase family. As to quaternary structure, interacts with CLN5, ATP5F1A and ATP5F1B. Post-translationally, glycosylated.

Its subcellular location is the lysosome. It localises to the secreted. The protein resides in the golgi apparatus. It is found in the endoplasmic reticulum. It carries out the reaction S-hexadecanoyl-L-cysteinyl-[protein] + H2O = L-cysteinyl-[protein] + hexadecanoate + H(+). The catalysed reaction is hexadecanoyl-CoA + H2O = hexadecanoate + CoA + H(+). The enzyme catalyses S-hexadecanoyl-N-acetylcysteamine + H2O = N-acetylcysteamine + hexadecanoate + H(+). It catalyses the reaction S-hexadecanoyl-N-acetylcysteine methyl ester + H2O = N-acetylcysteine methyl ester + hexadecanoate + H(+). Palmitoylation reduces PPT1 enzymatic activity. In terms of biological role, has thioesterase activity against fatty acid thioesters with 14 -18 carbons, including palmitoyl-CoA, S-palmitoyl-N-acetylcysteamine, and palmitoylated proteins. In contrast to PPT2, PPT1 can hydrolyze palmitoylated proteins and palmitoylcysteine. This is Palmitoyl-protein thioesterase 1 (PPT1) from Macaca fascicularis (Crab-eating macaque).